A 475-amino-acid chain; its full sequence is 3-keto-steroid reductase ERG27 (475 aa).

NADP(+)-binding residues include isoleucine 32, isoleucine 55, threonine 59, and lysine 65. Residues serine 249 and tyrosine 272 each act as proton donor in the active site. The NADP(+) site is built by tyrosine 272, lysine 276, valine 324, and serine 326. The active-site Lowers pKa of active site Tyr is lysine 276.

This sequence belongs to the short-chain dehydrogenases/reductases (SDR) family. ERG27 subfamily. Heterotetramer of ERG25, ERG26, ERG27 and ERG28. ERG28 acts as a scaffold to tether ERG27 and other 4,4-demethylation-related enzymes, forming a demethylation enzyme complex, in the endoplasmic reticulum.

Its subcellular location is the endoplasmic reticulum membrane. It is found in the lipid droplet. The protein operates within steroid metabolism; ergosterol biosynthesis. Functionally, 3-keto-steroid reductase; part of the third module of ergosterol biosynthesis pathway that includes the late steps of the pathway. ERG27 is a catalytic component of the C-4 demethylation complex that catalyzes the conversion of 4,4-dimethylfecosterol into fecosterol via 4-methylfecosterol. The third module or late pathway involves the ergosterol synthesis itself through consecutive reactions that mainly occur in the endoplasmic reticulum (ER) membrane. Firstly, the squalene synthase ERG9 catalyzes the condensation of 2 farnesyl pyrophosphate moieties to form squalene, which is the precursor of all steroids. Squalene synthase is crucial for balancing the incorporation of farnesyl diphosphate (FPP) into sterol and nonsterol isoprene synthesis. Secondly, squalene is converted into lanosterol by the consecutive action of the squalene epoxidase ERG1 and the lanosterol synthase ERG7. Then, the delta(24)-sterol C-methyltransferase ERG6 methylates lanosterol at C-24 to produce eburicol. Eburicol is the substrate of the sterol 14-alpha demethylase encoded by CYP51A, CYP51B and CYP51C, to yield 4,4,24-trimethyl ergosta-8,14,24(28)-trienol. CYP51B encodes the enzyme primarily responsible for sterol 14-alpha-demethylation, and plays an essential role in ascospore formation. CYP51A encodes an additional sterol 14-alpha-demethylase, induced on ergosterol depletion and responsible for the intrinsic variation in azole sensitivity. The third CYP51 isoform, CYP51C, does not encode a sterol 14-alpha-demethylase, but is required for full virulence on host wheat ears. The C-14 reductase ERG24 then reduces the C14=C15 double bond which leads to 4,4-dimethylfecosterol. A sequence of further demethylations at C-4, involving the C-4 demethylation complex containing the C-4 methylsterol oxidases ERG25, the sterol-4-alpha-carboxylate 3-dehydrogenase ERG26 and the 3-keto-steroid reductase ERG27, leads to the production of fecosterol via 4-methylfecosterol. ERG28 has a role as a scaffold to help anchor ERG25, ERG26 and ERG27 to the endoplasmic reticulum. The C-8 sterol isomerase ERG2 then catalyzes the reaction which results in unsaturation at C-7 in the B ring of sterols and thus converts fecosterol to episterol. The sterol-C5-desaturases ERG3A and ERG3BB then catalyze the introduction of a C-5 double bond in the B ring to produce 5-dehydroepisterol. The C-22 sterol desaturases ERG5A and ERG5B further convert 5-dehydroepisterol into ergosta-5,7,22,24(28)-tetraen-3beta-ol by forming the C-22(23) double bond in the sterol side chain. Finally, ergosta-5,7,22,24(28)-tetraen-3beta-ol is substrate of the C-24(28) sterol reductase ERG4 to produce ergosterol. This chain is 3-keto-steroid reductase ERG27, found in Gibberella zeae (strain ATCC MYA-4620 / CBS 123657 / FGSC 9075 / NRRL 31084 / PH-1) (Wheat head blight fungus).